Here is a 308-residue protein sequence, read N- to C-terminus: Glutaminase (308 aa).

Substrate contacts are provided by S66, N117, E162, N169, Y193, Y244, and V262.

The protein belongs to the glutaminase family. Homotetramer.

It catalyses the reaction L-glutamine + H2O = L-glutamate + NH4(+). The protein is Glutaminase of Natranaerobius thermophilus (strain ATCC BAA-1301 / DSM 18059 / JW/NM-WN-LF).